The following is a 1031-amino-acid chain: Caprin-2 (1031 aa).

Disordered stretches follow at residues 1–27, 364–458, 500–520, 605–658, and 830–876; these read MKSA…QSTL, LQEE…SWEN, PKDV…LPKD, DQAS…SSEA, and RSGT…SMTP. 2 stretches are compositionally biased toward polar residues: residues 425-439 and 446-458; these read VSVQ…SWTT and ASVQ…SWEN. A compositionally biased stretch (low complexity) spans 608 to 646; sequence SSGSETEFTTSETPEMVVSPCKPKPASALASPNPPLSKS. Over residues 830-853 the composition is skewed to polar residues; that stretch reads RSGTSSGLQANSRAGWSDSSQVSS. Phosphoserine is present on residues Ser852 and Ser853. The region spanning 897-1031 is the C1q domain; sequence PQQMRVAFSA…TFSGYLLYQD (135 aa). Residues Asp982 and Glu988 each contribute to the Ca(2+) site.

Belongs to the caprin family. In terms of assembly, homotrimer; via C1q domain. Found in a complex with LRP6, CCNY and CDK14 during G2/M stage; CAPRIN2 functions as a scaffold for the complex by binding to CCNY via its N terminus and to CDK14 via its C terminus. Interacts with LRP5. Interacts with LRP6. In terms of tissue distribution, specifically expressed in brain (at protein level).

Its subcellular location is the cytoplasm. It localises to the cell membrane. Functionally, promotes phosphorylation of the Wnt coreceptor LRP6, leading to increased activity of the canonical Wnt signaling pathway. Facilitates constitutive LRP6 phosphorylation by CDK14/CCNY during G2/M stage of the cell cycle, which may potentiate cells for Wnt signaling. May regulate the transport and translation of mRNAs, modulating for instance the expression of proteins involved in synaptic plasticity in neurons. Involved in regulation of growth as erythroblasts shift from a highly proliferative state towards their terminal phase of differentiation. May be involved in apoptosis. The chain is Caprin-2 from Mus musculus (Mouse).